We begin with the raw amino-acid sequence, 981 residues long: Transcription factor TAC1 (981 aa).

A compositionally biased stretch (polar residues) spans 1–29 (MDTSSSSGTHPSTFNNLTKQQELTGNDPN). The interval 1-33 (MDTSSSSGTHPSTFNNLTKQQELTGNDPNDTNR) is disordered. The segment at residues 40–68 (CDSCRRKKIKCNGSYPCGNCIQAKNTSNC) is a DNA-binding region (zn(2)-C6 fungal-type). Disordered stretches follow at residues 74-106 (PVRK…TFSG), 165-199 (HSNS…TSHS), and 868-902 (LRDN…SNST). The segment covering 165–177 (HSNSSMFNNNSLS) has biased composition (low complexity). Over residues 868 to 880 (LRDNSTNHGQNNM) the composition is skewed to polar residues. Residues 881 to 902 (NPSPTITNNTYNSNINTGSNST) are compositionally biased toward low complexity.

Phosphorylated. Phosphorylation leads to hyperactivation.

The protein localises to the nucleus. With respect to regulation, drugs such as farnesol and 1-dodecanol are able to hyperactivate TAC1 probably via phosphorylation by the Mediator complex. Functionally, transcriptional activator of drug-responsive genes including the ABC-type transporters CDR1 and CDR2, as well as HSP12 and RTA3. Binds the cis-acting regulatory drug-responsive elements (DREs) with the consensus sequence 5'-CGGAWATCGGATATTTTTTT-3' in the promoters of target genes. The polypeptide is Transcription factor TAC1 (Candida albicans (strain SC5314 / ATCC MYA-2876) (Yeast)).